Here is a 221-residue protein sequence, read N- to C-terminus: UPF0319 protein NTHI1987 (221 aa).

Positions 1–21 are cleaved as a signal peptide; the sequence is MKLRAVVLGLATLCTSTATFA.

The protein belongs to the UPF0319 family.

The sequence is that of UPF0319 protein NTHI1987 from Haemophilus influenzae (strain 86-028NP).